The following is a 350-amino-acid chain: Phosphotriesterase-related protein (350 aa).

Positions 24, 26, 170, 202, 231, and 299 each coordinate a divalent metal cation.

Belongs to the metallo-dependent hydrolases superfamily. Phosphotriesterase family. Requires a divalent metal cation as cofactor.

The protein is Phosphotriesterase-related protein of Nematostella vectensis (Starlet sea anemone).